The primary structure comprises 207 residues: MSERLLVLVRHGQSEWNLKNLFTGWKDPDLTEQGVAEAREAGRKLKAQGLVFDVAYTSVLTRAQHTLDLILGELGQKGLPTEKNLALNERDYGDLSGLNKDDARKKWGEDQVLIWRRSYDVPPPGGESLKDTLARALPYYVQEILPSVLNGKRTLVAAHGNSLRALIMVLEKLSPEGILKRELATGVPIIYRLNADSTVASKLDLAG.

Substrate-binding positions include 10 to 17 (RHGQSEWN), 23 to 24 (TG), R62, 89 to 92 (ERDY), K100, 116 to 117 (RR), and 160 to 161 (GN). H11 serves as the catalytic Tele-phosphohistidine intermediate. Residue E89 is the Proton donor/acceptor of the active site.

Belongs to the phosphoglycerate mutase family. BPG-dependent PGAM subfamily. As to quaternary structure, homodimer.

It carries out the reaction (2R)-2-phosphoglycerate = (2R)-3-phosphoglycerate. It functions in the pathway carbohydrate degradation; glycolysis; pyruvate from D-glyceraldehyde 3-phosphate: step 3/5. Functionally, catalyzes the interconversion of 2-phosphoglycerate and 3-phosphoglycerate. The sequence is that of 2,3-bisphosphoglycerate-dependent phosphoglycerate mutase from Bradyrhizobium diazoefficiens (strain JCM 10833 / BCRC 13528 / IAM 13628 / NBRC 14792 / USDA 110).